A 95-amino-acid chain; its full sequence is Co-chaperonin GroES (95 aa).

It belongs to the GroES chaperonin family. In terms of assembly, heptamer of 7 subunits arranged in a ring. Interacts with the chaperonin GroEL.

The protein localises to the cytoplasm. Its function is as follows. Together with the chaperonin GroEL, plays an essential role in assisting protein folding. The GroEL-GroES system forms a nano-cage that allows encapsulation of the non-native substrate proteins and provides a physical environment optimized to promote and accelerate protein folding. GroES binds to the apical surface of the GroEL ring, thereby capping the opening of the GroEL channel. In Desulfatibacillum aliphaticivorans, this protein is Co-chaperonin GroES.